The primary structure comprises 614 residues: Probable Xaa-Pro aminopeptidase P (614 aa).

Residues aspartate 411, aspartate 422, glutamate 520, and glutamate 534 each coordinate Mn(2+).

This sequence belongs to the peptidase M24B family. Mn(2+) serves as cofactor.

The catalysed reaction is Release of any N-terminal amino acid, including proline, that is linked to proline, even from a dipeptide or tripeptide.. Functionally, catalyzes the removal of a penultimate prolyl residue from the N-termini of peptides. The chain is Probable Xaa-Pro aminopeptidase P (AMPP) from Sordaria macrospora (strain ATCC MYA-333 / DSM 997 / K(L3346) / K-hell).